The following is a 190-amino-acid chain: Large ribosomal subunit protein bL25 (190 aa).

This sequence belongs to the bacterial ribosomal protein bL25 family. CTC subfamily. As to quaternary structure, part of the 50S ribosomal subunit; part of the 5S rRNA/L5/L18/L25 subcomplex. Contacts the 5S rRNA. Binds to the 5S rRNA independently of L5 and L18.

Its function is as follows. This is one of the proteins that binds to the 5S RNA in the ribosome where it forms part of the central protuberance. The sequence is that of Large ribosomal subunit protein bL25 from Neisseria meningitidis serogroup C / serotype 2a (strain ATCC 700532 / DSM 15464 / FAM18).